The primary structure comprises 292 residues: Glutamyl-Q tRNA(Asp) synthetase (292 aa).

L-glutamate is bound by residues 9–13 and glutamate 45; that span reads RFAPS. Residues 12-22 carry the 'HIGH' region motif; it reads PSPSGPLHAGS. 4 residues coordinate Zn(2+): cysteine 99, cysteine 101, tyrosine 121, and cysteine 125. The L-glutamate site is built by tyrosine 184 and arginine 202. Positions 240-244 match the 'KMSKS' region motif; that stretch reads KLSKQ. Lysine 243 is a binding site for ATP.

This sequence belongs to the class-I aminoacyl-tRNA synthetase family. GluQ subfamily. Zn(2+) is required as a cofactor.

Functionally, catalyzes the tRNA-independent activation of glutamate in presence of ATP and the subsequent transfer of glutamate onto a tRNA(Asp). Glutamate is transferred on the 2-amino-5-(4,5-dihydroxy-2-cyclopenten-1-yl) moiety of the queuosine in the wobble position of the QUC anticodon. This Verminephrobacter eiseniae (strain EF01-2) protein is Glutamyl-Q tRNA(Asp) synthetase.